Consider the following 545-residue polypeptide: uncharacterized protein (545 aa).

Basic residues predominate over residues 1-10; that stretch reads MSRYRFRKAR. Residues 1-25 are disordered; the sequence is MSRYRFRKARSNWPMGQNDSRWEPP. WD repeat units follow at residues 417-456 and 460-501; these read ACNT…NPMM and GHSN…MLCS.

This is an uncharacterized protein from Caenorhabditis elegans.